The sequence spans 103 residues: Histone H4 (103 aa).

The segment covering 1–14 (MTGRGKGGKGLGKG) has biased composition (gly residues). A disordered region spans residues 1-20 (MTGRGKGGKGLGKGGAKRHR). An N6-acetyl-N6-methyllysine; alternate mark is found at Lys-6 and Lys-13. The DNA-binding element occupies 17–21 (KRHRK).

Belongs to the histone H4 family. The nucleosome is a histone octamer containing two molecules each of H2A, H2B, H3 and H4 assembled in one H3-H4 heterotetramer and two H2A-H2B heterodimers. The octamer wraps approximately 147 bp of DNA.

The protein localises to the nucleus. It localises to the chromosome. Its function is as follows. Core component of nucleosome. Nucleosomes wrap and compact DNA into chromatin, limiting DNA accessibility to the cellular machineries which require DNA as a template. Histones thereby play a central role in transcription regulation, DNA repair, DNA replication and chromosomal stability. DNA accessibility is regulated via a complex set of post-translational modifications of histones, also called histone code, and nucleosome remodeling. The protein is Histone H4 of Trichogramma cacaeciae (Moth egg parasite).